We begin with the raw amino-acid sequence, 137 residues long: Cellular retinoic acid-binding protein 1 (137 aa).

The short motif at 21–31 (KALGVNAMLRK) is the Nuclear localization signal element. 132 to 134 (RIY) lines the all-trans-retinoate pocket.

It belongs to the calycin superfamily. Fatty-acid binding protein (FABP) family.

Its subcellular location is the cytoplasm. Functionally, cytosolic CRABPs may regulate the access of retinoic acid to the nuclear retinoic acid receptors. In Hippocampus comes (Tiger tail seahorse), this protein is Cellular retinoic acid-binding protein 1 (crabp1).